Here is a 457-residue protein sequence, read N- to C-terminus: Peptidyl-prolyl cis-trans isomerase FKBP5 (457 aa).

Met-1 is modified (N-acetylmethionine). The tract at residues 1–26 is disordered; that stretch reads MTTDEGAKNNGESPTATVAEQGEDIT. A Phosphoserine modification is found at Ser-13. PPIase FKBP-type domains lie at 50-138 and 165-251; these read GDKV…LDFK and GATV…KSFE. TPR repeat units follow at residues 268–301, 317–350, and 351–384; these read AAIV…LEME, LAAF…DSAN, and GKGL…NPQN. The segment at 420–457 is disordered; that stretch reads DAKEEANKAMGKKTSEGVTNEKGTDSQAMEEEKPEGHV. A Phosphoserine modification is found at Ser-445.

Part of a heteromultimeric cytoplasmic complex with HSP90AA1, HSPA1A/HSPA1B and steroid receptors. Upon ligand binding dissociates from the complex and FKBP4 takes its place. Interacts with functionally mature heterooligomeric progesterone receptor complexes along with HSP90 and TEBP. Interacts with IFI44L; this interaction modulates the kinase activity of IKBKB and IKBKE. Interacts with IKBKB and IKBKE.

It localises to the cytoplasm. The protein resides in the nucleus. It catalyses the reaction [protein]-peptidylproline (omega=180) = [protein]-peptidylproline (omega=0). Its activity is regulated as follows. Inhibited by FK506 but not cyclosporin. Its function is as follows. Immunophilin protein with PPIase and co-chaperone activities. Component of unligated steroid receptors heterocomplexes through interaction with heat-shock protein 90 (HSP90). Plays a role in the intracellular trafficking of heterooligomeric forms of steroid hormone receptors maintaining the complex into the cytoplasm when unliganded. Acts as a regulator of Akt/AKT1 activity by promoting the interaction between Akt/AKT1 and PHLPP1, thereby enhancing dephosphorylation and subsequent activation of Akt/AKT1. Interacts with IKBKE and IKBKB which facilitates IKK complex assembly leading to increased IKBKE and IKBKB kinase activity, NF-kappaB activation, and IFN production. In Pongo abelii (Sumatran orangutan), this protein is Peptidyl-prolyl cis-trans isomerase FKBP5 (FKBP5).